The sequence spans 194 residues: Serine/threonine-protein kinase mos (194 aa).

A Protein kinase domain is found at 47–194 (LCLLNLLGSG…HLDLKPANIF (148 aa)). ATP contacts are provided by residues 53–61 (LGSGGFGSV) and Lys74. The Proton acceptor role is filled by Asp187.

It belongs to the protein kinase superfamily. Ser/Thr protein kinase family.

It catalyses the reaction L-seryl-[protein] + ATP = O-phospho-L-seryl-[protein] + ADP + H(+). It carries out the reaction L-threonyl-[protein] + ATP = O-phospho-L-threonyl-[protein] + ADP + H(+). The chain is Serine/threonine-protein kinase mos (MOS) from Dendroaspis angusticeps (Eastern green mamba).